A 571-amino-acid polypeptide reads, in one-letter code: Phosphatidylinositol-3,5-bisphosphate 3-phosphatase MTMR2 (571 aa).

One can recognise a GRAM domain in the interval 1 to 67; it reads MEEPPLLPGE…GVINRVEKIG (67 aa). One can recognise a Myotubularin phosphatase domain in the interval 133–508; sequence GWKVYDPIWE…RHLELWVGYY (376 aa). Residues asparagine 258, asparagine 283, and isoleucine 284 each contribute to the a 1,2-diacyl-sn-glycero-3-phospho-(1D-myo-inositol-3,5-bisphosphate) site. Positions 258, 283, and 284 each coordinate a 1,2-diacyl-sn-glycero-3-phospho-(1D-myo-inositol-3-phosphate). Residue cysteine 345 is the Phosphocysteine intermediate of the active site. Positions 346, 347, 348, 349, 350, 351, 387, and 391 each coordinate a 1,2-diacyl-sn-glycero-3-phospho-(1D-myo-inositol-3,5-bisphosphate). 6 residues coordinate a 1,2-diacyl-sn-glycero-3-phospho-(1D-myo-inositol-3-phosphate): serine 346, aspartate 347, glycine 348, tryptophan 349, aspartate 350, and arginine 351. Arginine 391 lines the a 1,2-diacyl-sn-glycero-3-phospho-(1D-myo-inositol-3-phosphate) pocket. The stretch at 521-553 forms a coiled coil; it reads VHNRYKELLAKRAELQKKVEELQREITNRSTSS. The segment at 544 to 571 is disordered; it reads REITNRSTSSSERAGSPAQCVTPVQTVV.

This sequence belongs to the protein-tyrosine phosphatase family. Non-receptor class myotubularin subfamily. In terms of assembly, homooligomer and heterooligomer.

Its subcellular location is the cytoplasm. It localises to the early endosome membrane. It catalyses the reaction a 1,2-diacyl-sn-glycero-3-phospho-(1D-myo-inositol-3,5-bisphosphate) + H2O = a 1,2-diacyl-sn-glycero-3-phospho-(1D-myo-inositol-5-phosphate) + phosphate. The enzyme catalyses a 1,2-diacyl-sn-glycero-3-phospho-(1D-myo-inositol-3-phosphate) + H2O = a 1,2-diacyl-sn-glycero-3-phospho-(1D-myo-inositol) + phosphate. It carries out the reaction 1,2-dioctanoyl-sn-glycero-3-phospho-(1-D-myo-inositol-3-phosphate) + H2O = 1,2-dioctanoyl-sn-glycero-3-phospho-(1D-myo-inositol) + phosphate. The catalysed reaction is 1,2-dioctanoyl-sn-glycero-3-phospho-(1D-myo-inositol-3,5-bisphosphate) + H2O = 1,2-dioctanoyl-sn-glycero-3-phospho-(1D-myo-inositol-5-phosphate) + phosphate. Functionally, lipid phosphatase that specifically dephosphorylates the D-3 position of phosphatidylinositol 3-phosphate and phosphatidylinositol 3,5-bisphosphate, generating phosphatidylinositol and phosphatidylinositol 5-phosphate. Regulates the level of these phosphoinositides critical for various biological processes including autophagy initiation and autophagosome maturation. The polypeptide is Phosphatidylinositol-3,5-bisphosphate 3-phosphatase MTMR2 (Gallus gallus (Chicken)).